The primary structure comprises 658 residues: Aspartate--tRNA ligase, mitochondrial (658 aa).

Glutamate 198 is an L-aspartate binding site. The segment at 226 to 229 (QQYK) is aspartate. Arginine 248 contacts L-aspartate. ATP contacts are provided by residues 248–250 (RDE) and glutamate 553. Arginine 560 serves as a coordination point for L-aspartate. Residue 604 to 607 (GFDR) coordinates ATP.

It belongs to the class-II aminoacyl-tRNA synthetase family. Type 1 subfamily.

Its subcellular location is the mitochondrion matrix. It catalyses the reaction tRNA(Asp) + L-aspartate + ATP = L-aspartyl-tRNA(Asp) + AMP + diphosphate. In terms of biological role, catalyzes the attachment of aspartate to tRNA(Asp) in the mitochondrion. The chain is Aspartate--tRNA ligase, mitochondrial (MSD1) from Saccharomyces cerevisiae (strain ATCC 204508 / S288c) (Baker's yeast).